Consider the following 229-residue polypeptide: uncharacterized protein (229 aa).

7 consecutive transmembrane segments (helical) span residues 6-26 (LFFVSYVLYGLGFVSLIFLPT), 36-56 (LVSVIIGLIANYEMKFNILLA), 80-99 (SVYDVFCHTIMMMLCYHRIY), 114-134 (VLSVLFILGAMINCLVSHLII), 144-164 (IFEYTTIFQAVSTGYWVATML), 174-194 (FYYHWLLWITLMTTNWFIYKF), and 207-224 (YVEAVFIICTWYSGVLSS).

The protein belongs to the mimivirus L68/R809 family.

It is found in the membrane. This is an uncharacterized protein from Acanthamoeba polyphaga (Amoeba).